The chain runs to 129 residues: Small ribosomal subunit protein uS11 (129 aa).

The protein belongs to the universal ribosomal protein uS11 family. In terms of assembly, part of the 30S ribosomal subunit. Interacts with proteins S7 and S18. Binds to IF-3.

In terms of biological role, located on the platform of the 30S subunit, it bridges several disparate RNA helices of the 16S rRNA. Forms part of the Shine-Dalgarno cleft in the 70S ribosome. The polypeptide is Small ribosomal subunit protein uS11 (Ectopseudomonas mendocina (strain ymp) (Pseudomonas mendocina)).